A 376-amino-acid polypeptide reads, in one-letter code: Putative glutamate--cysteine ligase 2 (376 aa).

The protein belongs to the glutamate--cysteine ligase type 2 family. YbdK subfamily.

The enzyme catalyses L-cysteine + L-glutamate + ATP = gamma-L-glutamyl-L-cysteine + ADP + phosphate + H(+). Its function is as follows. ATP-dependent carboxylate-amine ligase which exhibits weak glutamate--cysteine ligase activity. The sequence is that of Putative glutamate--cysteine ligase 2 from Mycolicibacterium paratuberculosis (strain ATCC BAA-968 / K-10) (Mycobacterium paratuberculosis).